Consider the following 302-residue polypeptide: Probable histone acetyltransferase Rv0428c (302 aa).

It carries out the reaction L-lysyl-[histone] + acetyl-CoA = N(6)-acetyl-L-lysyl-[histone] + CoA + H(+). In terms of biological role, shows histone acetyl transferase (HAT) activity with recombinant eukaryotic H3 histone expressed in bacteria as substrate and acetyl-CoA as donor. May be involved in survival under stress conditions. The chain is Probable histone acetyltransferase Rv0428c from Mycobacterium tuberculosis (strain ATCC 25618 / H37Rv).